The sequence spans 545 residues: MKNTFILGIEGTAWNLSAAIVTETEIIAEVTETYKPTAGGIHPREAAQHHAKYAASVIKRLLAEAKEKGVKPSDIDGIAFSQGPGLGPCLRTVATAARMLSISLGIPLIGVNHCIAHIEIGIWRTPAMDPVVLYVSGANSQVISYMGGRYRVFGETLDIGLGNALDKFARGANLPHPGGPKIEAYAKNATKYIHLPYVIKGMDLSFSGLSTAASEALKKAPLEDVCYSYQETAFAMVVEVAERALAHTGKKEVLLAGGVGANTRLREMLNDMCEARGAKFYVPEKRFMGDNGTMIAYTGLLMYKSGNTLSLEDSRVNPSYRTDDVKVTWIQEEKMKRVPEISPGTSLKLGELLDNGAEAIVYLEEGPEGKKILVKERVPKAYRYKEIDERIRTERNRTEARLMSESRRHGVSTPIIYDVEDFKLKMQYIDGVPIKYLVTPELSEKVGELVGKLHSAGIVHGDLTTSNILLAGERLYLLDFGLAYYDKGLEARGVDVHVLFQTFESTHRNHEALIEAFKKGYRRTFIDSEDVLTRVEEIKKRARYA.

The tract at residues 1 to 329 is kae1; it reads MKNTFILGIE…YRTDDVKVTW (329 aa). Fe cation is bound by residues His-113, His-117, and Tyr-134. L-threonylcarbamoyladenylate is bound by residues 134–138, Asp-166, Gly-179, Glu-183, and Asn-262; that span reads YVSGA. Asp-290 contributes to the Fe cation binding site. Positions 340-545 constitute a Protein kinase domain; sequence EISPGTSLKL…EEIKKRARYA (206 aa). ATP-binding positions include 353–361 and Lys-375; that span reads LDNGAEAIV. The Proton acceptor; for kinase activity role is filled by Asp-462.

The protein in the N-terminal section; belongs to the KAE1 / TsaD family. It in the C-terminal section; belongs to the protein kinase superfamily. Tyr protein kinase family. BUD32 subfamily. Component of the KEOPS complex that consists of Kae1, Bud32, Cgi121 and Pcc1; the whole complex dimerizes. Fe(2+) serves as cofactor.

The protein localises to the cytoplasm. It carries out the reaction L-seryl-[protein] + ATP = O-phospho-L-seryl-[protein] + ADP + H(+). The enzyme catalyses L-threonyl-[protein] + ATP = O-phospho-L-threonyl-[protein] + ADP + H(+). The catalysed reaction is L-threonylcarbamoyladenylate + adenosine(37) in tRNA = N(6)-L-threonylcarbamoyladenosine(37) in tRNA + AMP + H(+). Its function is as follows. Required for the formation of a threonylcarbamoyl group on adenosine at position 37 (t(6)A37) in tRNAs that read codons beginning with adenine. Is a component of the KEOPS complex that is probably involved in the transfer of the threonylcarbamoyl moiety of threonylcarbamoyl-AMP (TC-AMP) to the N6 group of A37. The Kae1 domain likely plays a direct catalytic role in this reaction. The Bud32 domain probably displays kinase activity that regulates Kae1 function. The protein is Probable bifunctional tRNA threonylcarbamoyladenosine biosynthesis protein of Methanosarcina barkeri (strain Fusaro / DSM 804).